Consider the following 421-residue polypeptide: UDP-N-acetylglucosamine 1-carboxyvinyltransferase (421 aa).

22–23 (KN) is a phosphoenolpyruvate binding site. Position 92 (R92) interacts with UDP-N-acetyl-alpha-D-glucosamine. The Proton donor role is filled by C116. C116 carries the 2-(S-cysteinyl)pyruvic acid O-phosphothioketal modification. 2 residues coordinate UDP-N-acetyl-alpha-D-glucosamine: D306 and V328.

The protein belongs to the EPSP synthase family. MurA subfamily.

The protein localises to the cytoplasm. It carries out the reaction phosphoenolpyruvate + UDP-N-acetyl-alpha-D-glucosamine = UDP-N-acetyl-3-O-(1-carboxyvinyl)-alpha-D-glucosamine + phosphate. It functions in the pathway cell wall biogenesis; peptidoglycan biosynthesis. Functionally, cell wall formation. Adds enolpyruvyl to UDP-N-acetylglucosamine. The sequence is that of UDP-N-acetylglucosamine 1-carboxyvinyltransferase from Thermotoga maritima (strain ATCC 43589 / DSM 3109 / JCM 10099 / NBRC 100826 / MSB8).